We begin with the raw amino-acid sequence, 346 residues long: Holliday junction branch migration complex subunit RuvB (346 aa).

The segment at M1–Y182 is large ATPase domain (RuvB-L). ATP is bound by residues L21, R22, G63, K66, T67, T68, E129–F131, R172, Y182, and R219. T67 provides a ligand contact to Mg(2+). Positions T183–L253 are small ATPAse domain (RuvB-S). Residues N256–D346 are head domain (RuvB-H). Residues R292, R311, and R316 each coordinate DNA.

Belongs to the RuvB family. As to quaternary structure, homohexamer. Forms an RuvA(8)-RuvB(12)-Holliday junction (HJ) complex. HJ DNA is sandwiched between 2 RuvA tetramers; dsDNA enters through RuvA and exits via RuvB. An RuvB hexamer assembles on each DNA strand where it exits the tetramer. Each RuvB hexamer is contacted by two RuvA subunits (via domain III) on 2 adjacent RuvB subunits; this complex drives branch migration. In the full resolvosome a probable DNA-RuvA(4)-RuvB(12)-RuvC(2) complex forms which resolves the HJ.

The protein localises to the cytoplasm. The enzyme catalyses ATP + H2O = ADP + phosphate + H(+). Its function is as follows. The RuvA-RuvB-RuvC complex processes Holliday junction (HJ) DNA during genetic recombination and DNA repair, while the RuvA-RuvB complex plays an important role in the rescue of blocked DNA replication forks via replication fork reversal (RFR). RuvA specifically binds to HJ cruciform DNA, conferring on it an open structure. The RuvB hexamer acts as an ATP-dependent pump, pulling dsDNA into and through the RuvAB complex. RuvB forms 2 homohexamers on either side of HJ DNA bound by 1 or 2 RuvA tetramers; 4 subunits per hexamer contact DNA at a time. Coordinated motions by a converter formed by DNA-disengaged RuvB subunits stimulates ATP hydrolysis and nucleotide exchange. Immobilization of the converter enables RuvB to convert the ATP-contained energy into a lever motion, pulling 2 nucleotides of DNA out of the RuvA tetramer per ATP hydrolyzed, thus driving DNA branch migration. The RuvB motors rotate together with the DNA substrate, which together with the progressing nucleotide cycle form the mechanistic basis for DNA recombination by continuous HJ branch migration. Branch migration allows RuvC to scan DNA until it finds its consensus sequence, where it cleaves and resolves cruciform DNA. This Rhizobium etli (strain CIAT 652) protein is Holliday junction branch migration complex subunit RuvB.